The following is a 918-amino-acid chain: Isoleucine--tRNA ligase (918 aa).

The 'HIGH' region signature appears at 59–69 (PYANGHLHIGH). An L-isoleucyl-5'-AMP-binding site is contributed by Glu570. The 'KMSKS' region motif lies at 611-615 (KMSKS). Lys614 contacts ATP. Residues Cys893, Cys896, Cys908, and Cys911 each contribute to the Zn(2+) site.

It belongs to the class-I aminoacyl-tRNA synthetase family. IleS type 1 subfamily. As to quaternary structure, monomer. Zn(2+) is required as a cofactor.

It localises to the cytoplasm. It carries out the reaction tRNA(Ile) + L-isoleucine + ATP = L-isoleucyl-tRNA(Ile) + AMP + diphosphate. Its function is as follows. Catalyzes the attachment of isoleucine to tRNA(Ile). As IleRS can inadvertently accommodate and process structurally similar amino acids such as valine, to avoid such errors it has two additional distinct tRNA(Ile)-dependent editing activities. One activity is designated as 'pretransfer' editing and involves the hydrolysis of activated Val-AMP. The other activity is designated 'posttransfer' editing and involves deacylation of mischarged Val-tRNA(Ile). This Campylobacter concisus (strain 13826) protein is Isoleucine--tRNA ligase.